The sequence spans 423 residues: TNF receptor-associated factor family protein DDB_G0277243 (423 aa).

The RING-type; degenerate zinc-finger motif lies at 20 to 66 (CSICVDPVLNSLPLEQHQALSCKNGHLLCQACWGKQLALRKECCICK). 2 TRAF-type zinc fingers span residues 124 to 179 (SHLR…NDMP) and 180 to 237 (THIE…CYLS). Residues 287-411 (RYKGNWTIEN…DGKLTINIDV (125 aa)) enclose the MATH domain.

This sequence belongs to the TNF receptor-associated factor family. A subfamily.

It is found in the cytoplasm. In terms of biological role, probable adapter protein and signal transducer that links members of the tumor necrosis factor receptor family to different signaling pathways by association with the receptor cytoplasmic domain and kinases. The polypeptide is TNF receptor-associated factor family protein DDB_G0277243 (Dictyostelium discoideum (Social amoeba)).